A 303-amino-acid chain; its full sequence is Deoxyhypusine hydroxylase (303 aa).

Met-1 is subject to N-acetylmethionine. HEAT-like PBS-type repeat units lie at residues 23–49 (ARFRALFTLRGLGGPVAISWISRAFDD), 54–80 (LKHELAYCLGQMQDRRAIPVLLDVLRD), 87–113 (VRHEAGEALGAIGDPEVLEILKQYSTD), 175–201 (DRYRAMFALRDAGGKEAALALAEGLRC), 206–232 (FRHEIGYVLGQMQHEAAVPQLAAALAQ), and 239–265 (VRHECAEALGAIARPACLAALRAHVAD). Positions 56, 89, and 90 each coordinate Fe cation. Residues His-208, His-241, and Glu-242 each coordinate Fe cation.

Belongs to the deoxyhypusine hydroxylase family. Fe(2+) is required as a cofactor.

The catalysed reaction is [eIF5A protein]-deoxyhypusine + AH2 + O2 = [eIF5A protein]-hypusine + A + H2O. It participates in protein modification; eIF5A hypusination. Functionally, catalyzes the hydroxylation of the N(6)-(4-aminobutyl)-L-lysine intermediate produced by deoxyhypusine synthase/DHPS on a critical lysine of the eukaryotic translation initiation factor 5A/eIF-5A. This is the second step of the post-translational modification of that lysine into an unusual amino acid residue named hypusine. Hypusination is unique to mature eIF-5A factor and is essential for its function. The chain is Deoxyhypusine hydroxylase from Bos taurus (Bovine).